The following is a 77-amino-acid chain: Sec-independent protein translocase protein TatA (77 aa).

A helical membrane pass occupies residues 1–21; sequence MGGLSIWHWLIVLLIVALVFG. The interval 40 to 77 is disordered; the sequence is KDGMREGEAPADPQQLPRSGSVNVDAKDATRSSDSNKA. Residues 64–77 are compositionally biased toward basic and acidic residues; it reads DAKDATRSSDSNKA.

Belongs to the TatA/E family. The Tat system comprises two distinct complexes: a TatABC complex, containing multiple copies of TatA, TatB and TatC subunits, and a separate TatA complex, containing only TatA subunits. Substrates initially bind to the TatABC complex, which probably triggers association of the separate TatA complex to form the active translocon.

The protein resides in the cell inner membrane. In terms of biological role, part of the twin-arginine translocation (Tat) system that transports large folded proteins containing a characteristic twin-arginine motif in their signal peptide across membranes. TatA could form the protein-conducting channel of the Tat system. The chain is Sec-independent protein translocase protein TatA from Burkholderia thailandensis (strain ATCC 700388 / DSM 13276 / CCUG 48851 / CIP 106301 / E264).